The following is a 1160-amino-acid chain: Major DNA-binding protein (1160 aa).

The short motif at 808–809 (FW) is the Required for filament formation element. A required for nuclear localization region spans residues 1139–1160 (ARGGEHAFDEDCGLLPAKRGRL).

It belongs to the herpesviridae major DNA-binding protein family. As to quaternary structure, homooligomers. Forms double-helical filaments necessary for the formation of replication compartments within the host nucleus. Interacts with the origin-binding protein. Interacts with the helicase primase complex; this interaction stimulates primer synthesis activity of the helicase-primase complex. Interacts with the DNA polymerase. Interacts with the alkaline exonuclease; this interaction increases its nuclease processivity.

Its subcellular location is the host nucleus. In terms of biological role, single-stranded DNA-binding protein required for DNA replication. Plays several crucial roles in viral infection. Participates in the opening of the viral DNA origin to initiate replication by interacting with the origin-binding protein. May disrupt loops, hairpins and other secondary structures present on ssDNA to reduce and eliminate pausing of viral DNA polymerase at specific sites during elongation. Promotes viral DNA recombination by performing strand-transfer, characterized by the ability to transfer a DNA strand from a linear duplex to a complementary single-stranded DNA circle. Can also catalyze the renaturation of complementary single strands. Additionally, reorganizes the host cell nucleus, leading to the formation of prereplicative sites and replication compartments. This process is driven by the protein which can form double-helical filaments in the absence of DNA. This is Major DNA-binding protein from Simian cytomegalovirus (strain Colburn).